We begin with the raw amino-acid sequence, 92 residues long: uncharacterized protein (92 aa).

This is an uncharacterized protein from Bacillus subtilis (strain 168).